The sequence spans 209 residues: Uracil phosphoribosyltransferase (209 aa).

5-phospho-alpha-D-ribose 1-diphosphate contacts are provided by residues arginine 79, arginine 104, and 131-139 (DPMLATGGS). Uracil is bound by residues valine 194 and 199–201 (GDA). Residue aspartate 200 coordinates 5-phospho-alpha-D-ribose 1-diphosphate.

Belongs to the UPRTase family. Mg(2+) is required as a cofactor.

It carries out the reaction UMP + diphosphate = 5-phospho-alpha-D-ribose 1-diphosphate + uracil. Its pathway is pyrimidine metabolism; UMP biosynthesis via salvage pathway; UMP from uracil: step 1/1. Its activity is regulated as follows. Allosterically activated by GTP. In terms of biological role, catalyzes the conversion of uracil and 5-phospho-alpha-D-ribose 1-diphosphate (PRPP) to UMP and diphosphate. This is Uracil phosphoribosyltransferase from Bacillus mycoides (strain KBAB4) (Bacillus weihenstephanensis).